Reading from the N-terminus, the 132-residue chain is Small ribosomal subunit protein bS6 (132 aa).

Residues 96–132 (HAEGPSIQMQKRDERERGDRGDRSDRGDRGDRGGFRR) are disordered. Residues 105 to 132 (QKRDERERGDRGDRSDRGDRGDRGGFRR) are compositionally biased toward basic and acidic residues.

This sequence belongs to the bacterial ribosomal protein bS6 family.

Its function is as follows. Binds together with bS18 to 16S ribosomal RNA. This chain is Small ribosomal subunit protein bS6, found in Cereibacter sphaeroides (strain ATCC 17023 / DSM 158 / JCM 6121 / CCUG 31486 / LMG 2827 / NBRC 12203 / NCIMB 8253 / ATH 2.4.1.) (Rhodobacter sphaeroides).